A 211-amino-acid polypeptide reads, in one-letter code: ATP phosphoribosyltransferase (211 aa).

The protein belongs to the ATP phosphoribosyltransferase family. Short subfamily. As to quaternary structure, heteromultimer composed of HisG and HisZ subunits.

It localises to the cytoplasm. It carries out the reaction 1-(5-phospho-beta-D-ribosyl)-ATP + diphosphate = 5-phospho-alpha-D-ribose 1-diphosphate + ATP. Its pathway is amino-acid biosynthesis; L-histidine biosynthesis; L-histidine from 5-phospho-alpha-D-ribose 1-diphosphate: step 1/9. Functionally, catalyzes the condensation of ATP and 5-phosphoribose 1-diphosphate to form N'-(5'-phosphoribosyl)-ATP (PR-ATP). Has a crucial role in the pathway because the rate of histidine biosynthesis seems to be controlled primarily by regulation of HisG enzymatic activity. The chain is ATP phosphoribosyltransferase from Pseudomonas fluorescens (strain Pf0-1).